We begin with the raw amino-acid sequence, 95 residues long: MHGQVATIKDIVLEERPEVVDLHCNEQLLDSSESEEEDSVREQLVEQAQQAYRVVTTCGICKCPVRLVVQCGDADLKVLHELLLGDLSIVCPGCA.

An E7 terminal domain region spans residues M1 to E42. The short motif at L22 to E26 is the LXCXE motif; interaction with host RB1 and TMEM173/STING element. The segment at C58–C94 is a zinc-finger region. The Nuclear export signal signature appears at L76–L84.

Belongs to the papillomaviridae E7 protein family. As to quaternary structure, homodimer. Homooligomer. Interacts with host RB1; this interaction induces dissociation of RB1-E2F1 complex thereby disrupting RB1 activity. Interacts with host EP300; this interaction represses EP300 transcriptional activity. Interacts with protein E2; this interaction inhibits E7 oncogenic activity. Interacts with host TMEM173/STING; this interaction impairs the ability of TMEM173/STING to sense cytosolic DNA and promote the production of type I interferon (IFN-alpha and IFN-beta). Post-translationally, highly phosphorylated.

Its subcellular location is the host cytoplasm. The protein resides in the host nucleus. Functionally, plays a role in viral genome replication by driving entry of quiescent cells into the cell cycle. Stimulation of progression from G1 to S phase allows the virus to efficiently use the cellular DNA replicating machinery to achieve viral genome replication. E7 protein has both transforming and trans-activating activities. Induces the disassembly of the E2F1 transcription factor from RB1, with subsequent transcriptional activation of E2F1-regulated S-phase genes. Interferes with host histone deacetylation mediated by HDAC1 and HDAC2, leading to transcription activation. Also plays a role in the inhibition of both antiviral and antiproliferative functions of host interferon alpha. Interaction with host TMEM173/STING impairs the ability of TMEM173/STING to sense cytosolic DNA and promote the production of type I interferon (IFN-alpha and IFN-beta). The sequence is that of Protein E7 from Human papillomavirus type 61.